Reading from the N-terminus, the 235-residue chain is Large ribosomal subunit protein uL1 (235 aa).

This sequence belongs to the universal ribosomal protein uL1 family. As to quaternary structure, part of the 50S ribosomal subunit.

Binds directly to 23S rRNA. The L1 stalk is quite mobile in the ribosome, and is involved in E site tRNA release. Its function is as follows. Protein L1 is also a translational repressor protein, it controls the translation of the L11 operon by binding to its mRNA. The chain is Large ribosomal subunit protein uL1 from Symbiobacterium thermophilum (strain DSM 24528 / JCM 14929 / IAM 14863 / T).